The sequence spans 345 residues: Putative RING-H2 finger protein ATL36 (345 aa).

The signal sequence occupies residues 1–31; that stretch reads MNIFTRYHLPRVVSGVILPLFLFHLLPYVTC. The chain crosses the membrane as a helical span at residues 50–70; that stretch reads SIIAIVVLAIFISLGMVSCCL. The RING-type; atypical zinc-finger motif lies at 123–165; sequence CAICLSEFEDQETLRWMPPCSHTFHANCIDVWLSSWSTCPVCR. Ser-264 carries the phosphoserine modification.

The protein belongs to the RING-type zinc finger family. ATL subfamily.

It localises to the membrane. It carries out the reaction S-ubiquitinyl-[E2 ubiquitin-conjugating enzyme]-L-cysteine + [acceptor protein]-L-lysine = [E2 ubiquitin-conjugating enzyme]-L-cysteine + N(6)-ubiquitinyl-[acceptor protein]-L-lysine.. It participates in protein modification; protein ubiquitination. The sequence is that of Putative RING-H2 finger protein ATL36 (ATL36) from Arabidopsis thaliana (Mouse-ear cress).